The chain runs to 408 residues: Peptidase T (408 aa).

H78 provides a ligand contact to Zn(2+). D80 is a catalytic residue. Zn(2+) is bound at residue D140. E173 (proton acceptor) is an active-site residue. 3 residues coordinate Zn(2+): E174, D196, and H379.

This sequence belongs to the peptidase M20B family. Zn(2+) serves as cofactor.

It localises to the cytoplasm. It carries out the reaction Release of the N-terminal residue from a tripeptide.. Its function is as follows. Cleaves the N-terminal amino acid of tripeptides. The sequence is that of Peptidase T from Escherichia coli (strain UTI89 / UPEC).